A 240-amino-acid polypeptide reads, in one-letter code: Pro-opiomelanocortin B (240 aa).

A signal peptide spans Met-1–Gly-36. Gln-37 bears the Pyrrolidone carboxylic acid mark. Residue His-111 is a propeptide. N-acetylserine; in Corticotropin is present on Ser-112. Residue Ile-124 is modified to Isoleucine amide.

This sequence belongs to the POMC family. In terms of processing, specific enzymatic cleavages at paired basic residues yield the different active peptides. Post-translationally, acetylation of beta-endorphin occurs in a tissue-specific manner. Pituitary and hypothalamus of adult diploid animals.

Its subcellular location is the secreted. Stimulates the adrenal glands to release cortisol. Its function is as follows. Melanocyte-stimulating hormone alpha: Anorexigenic peptide. Increases the pigmentation of skin by increasing melanin production in melanocytes. In terms of biological role, melanocyte-stimulating hormone beta: Increases the pigmentation of skin by increasing melanin production in melanocytes. Functionally, beta-endorphin: Endogenous orexigenic opiate. Endogenous opiate. The protein is Pro-opiomelanocortin B (pomcb) of Oncorhynchus mykiss (Rainbow trout).